We begin with the raw amino-acid sequence, 539 residues long: Protein ENTREP2 (539 aa).

4 helical membrane passes run 31-51, 65-85, 89-109, and 176-196; these read IVLALGATQMALGCLIVAVSF, SCPFWAGFSVLLSGLIGVVSW, LSLVITFFMLLSAVCVMLNLA, and LLFSVCALNVLSTIVCALATA. The interval 301 to 481 is disordered; it reads VVGQPPASQV…TSKERPRSLV (181 aa). A compositionally biased stretch (polar residues) spans 306 to 331; sequence PASQVTSIGQQVAESSSGDPNTSAGF. Over residues 347–365 the composition is skewed to low complexity; the sequence is GTATPGSSPSPDGPVGAPA. Residues 395 to 408 are compositionally biased toward polar residues; that stretch reads SRSTSDPTLCTSSM.

It belongs to the ENTREP family.

Its subcellular location is the membrane. This is Protein ENTREP2 from Homo sapiens (Human).